The following is a 2637-amino-acid chain: Nonribisomal peptide synthetase valB (2637 aa).

A condensation 1 region spans residues 1-376 (MADGADYTQR…KALIRSPPST (376 aa)). An adenylation 1 region spans residues 413-803 (SQASRRPDAA…VGRRDNQIKL (391 aa)). Residues 946 to 1022 (PPANPPERAL…EAASEIKEPT (77 aa)) form the Carrier 1 domain. At Ser-983 the chain carries O-(pantetheine 4'-phosphoryl)serine. A disordered region spans residues 1016-1045 (SEIKEPTDASAPSPSPISRDLPLQKSNHDR). The condensation 2 stretch occupies residues 1063-1506 (VEAIYPCTAL…LSRADMSLLQ (444 aa)). Residues 1524-1933 (AREVAHQRPL…EGRKDTRVKL (410 aa)) form an adenylation 2 region. Residues 2078–2154 (KEVTDDQAFM…YMVSKTSVSN (77 aa)) enclose the Carrier 2 domain. Ser-2115 bears the O-(pantetheine 4'-phosphoryl)serine mark. Positions 2193–2582 (ESVAPATDAQ…LWMGAYLDAA (390 aa)) are condensation 3.

This sequence belongs to the NRP synthetase family.

It functions in the pathway secondary metabolite biosynthesis. Functionally, nonribisomal peptide synthetase; part of the gene cluster that mediates the biosynthesis of valactamides. The first step of the pathway is performed by the highly reducing polyketide synthase valA that produces the polyketide part of the final products. An acetyl starter unit is incorporated by the ketosynthase domain of valA, and subsequently 6 malonyl-CoA-derived ketide units are incorporated and fully reduced to their respective alkane forms by the action of the ketoreductase, dehydratase, and enoylreductase domains (except for the penultimate unit, which is reduced only to the alkene). The final five ketide units are each proposed to be alpha-methylated by the methyltransferase domain before ketone reduction by the ketoreductase domain. The C1 domain of the nonribisomal peptide synthetase valB then catalyzes amide bond formation between the heptaketide chain and L-valine (L-Val) attached to the T1 domain. The C2 domain incorporating L-isoleucine (L-Ile) then carries out chain elongation, which is followed by macrolactonization by the Ct domain to release the final product. This is Nonribisomal peptide synthetase valB from Aspergillus terreus.